A 206-amino-acid chain; its full sequence is Large ribosomal subunit protein uL4 (206 aa).

A disordered region spans residues 47–77 (GTQSTKTRSEVRGGGIKPWRQKGTGRARQGS).

The protein belongs to the universal ribosomal protein uL4 family. In terms of assembly, part of the 50S ribosomal subunit.

One of the primary rRNA binding proteins, this protein initially binds near the 5'-end of the 23S rRNA. It is important during the early stages of 50S assembly. It makes multiple contacts with different domains of the 23S rRNA in the assembled 50S subunit and ribosome. Its function is as follows. Forms part of the polypeptide exit tunnel. This is Large ribosomal subunit protein uL4 from Clostridium beijerinckii (strain ATCC 51743 / NCIMB 8052) (Clostridium acetobutylicum).